The sequence spans 178 residues: Protein GrpE (178 aa).

The protein belongs to the GrpE family. As to quaternary structure, homodimer.

It is found in the cytoplasm. Participates actively in the response to hyperosmotic and heat shock by preventing the aggregation of stress-denatured proteins, in association with DnaK and GrpE. It is the nucleotide exchange factor for DnaK and may function as a thermosensor. Unfolded proteins bind initially to DnaJ; upon interaction with the DnaJ-bound protein, DnaK hydrolyzes its bound ATP, resulting in the formation of a stable complex. GrpE releases ADP from DnaK; ATP binding to DnaK triggers the release of the substrate protein, thus completing the reaction cycle. Several rounds of ATP-dependent interactions between DnaJ, DnaK and GrpE are required for fully efficient folding. The protein is Protein GrpE of Bordetella avium (strain 197N).